A 377-amino-acid polypeptide reads, in one-letter code: Flagellin D (377 aa).

Residues 104–128 adopt a coiled-coil conformation; the sequence is NSKADRVAIQEEVTALNDELNRIAE.

The protein belongs to the bacterial flagellin family. As to quaternary structure, heteromer of multiple flagellin subunits including FlaA, FlaB, FlaC, FlaD and possibly FlaE.

Its subcellular location is the secreted. The protein localises to the bacterial flagellum. In terms of biological role, flagellin is the subunit protein which polymerizes to form the filaments of bacterial flagella. FlaD is not essential for flagellar synthesis and motility. May have a role in virulence unrelated to motility. This chain is Flagellin D (flaD), found in Vibrio anguillarum (Listonella anguillarum).